The following is a 238-amino-acid chain: Uridylate kinase (238 aa).

ATP is bound at residue 12 to 15; that stretch reads KLSG. UMP is bound at residue G54. 2 residues coordinate ATP: G55 and R59. Residues D74 and 135-142 contribute to the UMP site; that span reads TGNPFFTT. ATP is bound by residues T162, N163, Y168, and D171.

It belongs to the UMP kinase family. Homohexamer.

The protein localises to the cytoplasm. The enzyme catalyses UMP + ATP = UDP + ADP. It functions in the pathway pyrimidine metabolism; CTP biosynthesis via de novo pathway; UDP from UMP (UMPK route): step 1/1. With respect to regulation, inhibited by UTP. Catalyzes the reversible phosphorylation of UMP to UDP. The sequence is that of Uridylate kinase from Rhodopseudomonas palustris (strain HaA2).